A 542-amino-acid chain; its full sequence is Membrane protein insertase YidC (542 aa).

6 consecutive transmembrane segments (helical) span residues 6-26 (NILL…WQTD), 326-346 (LVVD…LLMF), 350-370 (FVGN…GGLY), 421-441 (GGCL…WVLL), 458-478 (LSVQ…MFLM), and 501-521 (VIFT…WLVG).

This sequence belongs to the OXA1/ALB3/YidC family. Type 1 subfamily. As to quaternary structure, interacts with the Sec translocase complex via SecD. Specifically interacts with transmembrane segments of nascent integral membrane proteins during membrane integration.

The protein localises to the cell inner membrane. Functionally, required for the insertion and/or proper folding and/or complex formation of integral membrane proteins into the membrane. Involved in integration of membrane proteins that insert both dependently and independently of the Sec translocase complex, as well as at least some lipoproteins. Aids folding of multispanning membrane proteins. The polypeptide is Membrane protein insertase YidC (Shewanella frigidimarina (strain NCIMB 400)).